A 186-amino-acid chain; its full sequence is Elongation factor P (186 aa).

It belongs to the elongation factor P family.

Its subcellular location is the cytoplasm. It participates in protein biosynthesis; polypeptide chain elongation. Involved in peptide bond synthesis. Stimulates efficient translation and peptide-bond synthesis on native or reconstituted 70S ribosomes in vitro. Probably functions indirectly by altering the affinity of the ribosome for aminoacyl-tRNA, thus increasing their reactivity as acceptors for peptidyl transferase. The chain is Elongation factor P from Synechococcus sp. (strain RCC307).